The following is a 501-amino-acid chain: Leukocyte receptor cluster member 9 (501 aa).

Disordered stretches follow at residues 1–43 (MGSR…PAPP), 61–86 (RQPH…KPPL), 203–234 (GQEA…GELE), and 281–300 (QALG…WGPA). Residues 40 to 67 (PAPPPACRFFLEGRCRFGARCRQPHPGA) form a C3H1-type zinc finger.

This chain is Leukocyte receptor cluster member 9 (LENG9), found in Homo sapiens (Human).